The primary structure comprises 542 residues: 4-coumarate--CoA ligase-like 5 (542 aa).

ATP contacts are provided by S204, S205, G206, T207, T208, and K212. F262 contributes to the (E)-4-coumaroyl-AMP binding site. R282 provides a ligand contact to CoA. The SBD1 stretch occupies residues D284–Q353. (E)-4-coumaroyl-AMP contacts are provided by G331, Q353, G354, and T358. Q353, G354, T358, D418, and R433 together coordinate ATP. The tract at residues G354–Y397 is SBD2. Residues K435 and K439 each coordinate (E)-4-coumaroyl-AMP. K441 and G442 together coordinate CoA. K524 serves as a coordination point for ATP.

Belongs to the ATP-dependent AMP-binding enzyme family. Mg(2+) serves as cofactor.

It carries out the reaction (E)-4-coumarate + ATP + CoA = (E)-4-coumaroyl-CoA + AMP + diphosphate. The enzyme catalyses (E)-4-coumarate + ATP + H(+) = (E)-4-coumaroyl-AMP + diphosphate. The catalysed reaction is (E)-4-coumaroyl-AMP + CoA = (E)-4-coumaroyl-CoA + AMP + H(+). Its function is as follows. Carboxylate--CoA ligase that may use 4-coumarate as substrate. Follows a two-step reaction mechanism, wherein the carboxylate substrate first undergoes adenylation by ATP, followed by a thioesterification in the presence of CoA to yield the final CoA thioester. The protein is 4-coumarate--CoA ligase-like 5 (4CLL5) of Oryza sativa subsp. japonica (Rice).